The chain runs to 332 residues: Formamidase (332 aa).

A CN hydrolase domain is found at 14–259 (FLAALIQYPV…WEIVTAEVYP (246 aa)). Glu-60 serves as the catalytic Proton acceptor. Lys-132 serves as the catalytic Proton donor. Cys-165 acts as the Nucleophile in catalysis.

Belongs to the carbon-nitrogen hydrolase superfamily. Aliphatic amidase family.

The enzyme catalyses formamide + H2O = formate + NH4(+). Functionally, is an aliphatic amidase with a restricted substrate specificity, as it only hydrolyzes formamide. This is Formamidase from Bacillus cereus (strain Q1).